Consider the following 41-residue polypeptide: Large ribosomal subunit protein bL36 (41 aa).

It belongs to the bacterial ribosomal protein bL36 family.

In Sphingopyxis alaskensis (strain DSM 13593 / LMG 18877 / RB2256) (Sphingomonas alaskensis), this protein is Large ribosomal subunit protein bL36.